The primary structure comprises 466 residues: Integrin-linked protein kinase homolog pat-4 (466 aa).

ANK repeat units follow at residues 50-79 (HAFS…RVNS), 83-112 (GDDT…DVNA), and 116-145 (HGMT…AVNV). The Protein kinase domain maps to 210-465 (LNLITKIAES…QIIPILERMI (256 aa)).

This sequence belongs to the protein kinase superfamily. TKL Ser/Thr protein kinase family. As to quaternary structure, interacts (via protein kinase domain) with unc-112 (via N-terminus). Interacts (via ANK repeats) with unc-97 (via first LIM domain). Interacts (via protein kinase domain) with pat-6 (via C-terminus CH domain). May form a complex with unc-112, unc-97 and pat-6. Does not interact with integrin pat-3. Component of an integrin containing attachment complex, composed of at least pat-2, pat-3, pat-4, pat-6, unc-52, unc-97 and unc-112. In terms of tissue distribution, expressed in body wall muscle.

The protein localises to the cytoplasm. It is found in the myofibril. It localises to the sarcomere. Its subcellular location is the m line. The protein resides in the basal cell membrane. Functionally, probable pseudokinase that acts as an adapter protein. Component of an integrin containing attachment complex, which is required for muscle development and maintenance. Involved in the assembly of dense bodies and M lines during body wall muscle development by recruiting several of their components including integrin pat-3, cpna-1, unc-89 and unc-112 to integrin-mediated attachment sites. Plays a role in distal tip cell (DTC) migration and in oocyte development probably by regulating the actin cytoskeleton. During the formation of neuromuscular junctions at the larval stage, negatively regulates membrane protrusion from body wall muscles. May be involved in thermotolerance and lifespan. The chain is Integrin-linked protein kinase homolog pat-4 from Caenorhabditis elegans.